The chain runs to 859 residues: Linoleate 9S-lipoxygenase 1 (859 aa).

Positions 21 to 161 (VKGTVVLMKK…HYTTDRVFFS (141 aa)) constitute a PLAT domain. Residues 164–859 (TYLPHETPAT…GRGIPNSVSI (696 aa)) enclose the Lipoxygenase domain. Residues 213–246 (KNPRPVLGGTQEYPYPRRGRTGRKPTKEDPQTES) form a disordered region. Residues His519, His524, His711, Asn715, and Ile859 each coordinate Fe cation.

The protein belongs to the lipoxygenase family. As to quaternary structure, monomer. Fe cation serves as cofactor. Seedlings, roots, leaves, and flowers (at protein level). Expressed in guard cells.

The protein localises to the cytoplasm. The enzyme catalyses (9Z,12Z)-octadecadienoate + O2 = (9S)-hydroperoxy-(10E,12Z)-octadecadienoate. It catalyses the reaction (9Z,12Z,15Z)-octadecatrienoate + O2 = (9S)-hydroperoxy-(10E,12Z,15Z)-octadecatrienoate. It participates in lipid metabolism; oxylipin biosynthesis. Its function is as follows. 9S-lipoxygenase that can use linoleic acid or linolenic acid as substrates. Plant lipoxygenases may be involved in a number of diverse aspects of plant physiology including growth and development, pest resistance, and senescence or responses to wounding. Catalyzes the hydroperoxidation of lipids containing a cis,cis-1,4-pentadiene structure. Function as regulators of root development by controlling the emergence of lateral roots. 9S-lypoxygenase-derived oxylipins may play an antagonistic role to ethylene signaling in the control of responses involving oxidative stress, lipid peroxidation and plant defense. LOX1-derived oxylipins may be involved in stress signaling from roots to shoots in response to cadmium exposure. 9S-lypoxygenase-derived oxylipins are engaged during infection to control the balance between salicylic acid (SA) and jasmonate (JA) signaling to facilitate infection by the fungal pathogen Fusarium graminearum. 9S-lypoxygenase-derived oxylipins activate brassinosteroid signaling to promote cell wall-based defense and limit pathogen infection. The LOX1-derived compound (9S)-hydroperoxy-(10E,12Z,15Z)-octadecatrienoate protects plant tissues against infection by the bacterial pathogen Pseudomonas syringae pv tomato DC3000. The LOX1-derived oxylipins are required to trigger stomatal closure in response to both infection by the bacterial pathogen Pseudomonas syringae pv tomato DC3000, and the pathogen-associated molecular pattern (PAMP) flagellin peptide flg22. Contributes to the oxidation of free fatty acids during seed aging. The protein is Linoleate 9S-lipoxygenase 1 of Arabidopsis thaliana (Mouse-ear cress).